We begin with the raw amino-acid sequence, 332 residues long: MMKKTVVIGLAVVVLAAVVAGGYWWYQSRQDNGLTLYGNVDIRTVNLSFRVGGRVESLAVDEGDAIKAGQVLGELDHKPYEIALMQAKAGVSVAQAQYDLMLAGYRDEEIAQAAAAVKQAQAAYDYAQNFYNRQQGLWKSRTISANDLENARSSRDQAQATLKSAQDKLRQYRSGNREQDIAQAKASLEQAQAQLAQAELNLQDSTLIAPSDGTLLTRAVEPGTVLNEGGTVFTVSLTRPVWVRAYVDERNLDQAQPGRKVLLYTDGRPDKPYHGQIGFVSPTAEFTPKTVETPDLRTDLVYRLRIVVTDADDALRQGMPVTVQFGDEAGHE.

The first 16 residues, 1–16 (MMKKTVVIGLAVVVLA), serve as a signal peptide directing secretion. A coiled-coil region spans residues 108-209 (EEIAQAAAAV…LNLQDSTLIA (102 aa)).

It belongs to the UPF0194 family.

The protein localises to the periplasm. This Shigella dysenteriae serotype 1 (strain Sd197) protein is UPF0194 membrane protein YbhG.